Consider the following 176-residue polypeptide: Cytochrome b (176 aa).

3 helical membrane-spanning segments follow: residues 33–53 (FGSLLGVCLAVQILTGLFLAM), 77–98 (WLLRYLHANGASMFFICLYLHV), and 113–133 (WNVGIILLFAVMATAFMGYVL). Heme b-binding residues include His83 and His97.

The protein belongs to the cytochrome b family. In terms of assembly, the cytochrome bc1 complex contains 11 subunits: 3 respiratory subunits (MT-CYB, CYC1 and UQCRFS1), 2 core proteins (UQCRC1 and UQCRC2) and 6 low-molecular weight proteins (UQCRH/QCR6, UQCRB/QCR7, UQCRQ/QCR8, UQCR10/QCR9, UQCR11/QCR10 and a cleavage product of UQCRFS1). This cytochrome bc1 complex then forms a dimer. It depends on heme b as a cofactor.

Its subcellular location is the mitochondrion inner membrane. Component of the ubiquinol-cytochrome c reductase complex (complex III or cytochrome b-c1 complex) that is part of the mitochondrial respiratory chain. The b-c1 complex mediates electron transfer from ubiquinol to cytochrome c. Contributes to the generation of a proton gradient across the mitochondrial membrane that is then used for ATP synthesis. The chain is Cytochrome b (MT-CYB) from Tadarida brasiliensis (Brazilian free-tailed bat).